The primary structure comprises 536 residues: Phosphoenolpyruvate carboxykinase (ATP) (536 aa).

Residues Arg-61, Tyr-195, and Lys-201 each coordinate substrate. ATP contacts are provided by residues Lys-201, His-220, and Gly-236–Thr-244. Mn(2+) contacts are provided by Lys-201 and His-220. A Mn(2+)-binding site is contributed by Asp-257. Glu-285, Arg-322, and Thr-447 together coordinate ATP. Arg-322 contributes to the substrate binding site.

Belongs to the phosphoenolpyruvate carboxykinase (ATP) family. Mn(2+) is required as a cofactor.

The protein localises to the cytoplasm. The catalysed reaction is oxaloacetate + ATP = phosphoenolpyruvate + ADP + CO2. The protein operates within carbohydrate biosynthesis; gluconeogenesis. Its function is as follows. Involved in the gluconeogenesis. Catalyzes the conversion of oxaloacetate (OAA) to phosphoenolpyruvate (PEP) through direct phosphoryl transfer between the nucleoside triphosphate and OAA. This is Phosphoenolpyruvate carboxykinase (ATP) from Rhizobium leguminosarum bv. trifolii (strain WSM2304).